The primary structure comprises 197 residues: Imidazoleglycerol-phosphate dehydratase (197 aa).

This sequence belongs to the imidazoleglycerol-phosphate dehydratase family.

Its subcellular location is the cytoplasm. It catalyses the reaction D-erythro-1-(imidazol-4-yl)glycerol 3-phosphate = 3-(imidazol-4-yl)-2-oxopropyl phosphate + H2O. It participates in amino-acid biosynthesis; L-histidine biosynthesis; L-histidine from 5-phospho-alpha-D-ribose 1-diphosphate: step 6/9. In Pseudomonas aeruginosa (strain LESB58), this protein is Imidazoleglycerol-phosphate dehydratase.